The following is a 229-amino-acid chain: Prolactin (229 aa).

A signal peptide spans 1 to 30 (MDSKGSAQKGSRLLLLLVVSNLLLCQGVVS). Residues cysteine 34 and cysteine 41 are joined by a disulfide bond. Residues serine 56, serine 64, and serine 120 each carry the phosphoserine modification. Intrachain disulfides connect cysteine 88-cysteine 204 and cysteine 221-cysteine 229.

Belongs to the somatotropin/prolactin family. Interacts with PRLR.

Its subcellular location is the secreted. Prolactin acts primarily on the mammary gland by promoting lactation. In Capra hircus (Goat), this protein is Prolactin (PRL).